We begin with the raw amino-acid sequence, 291 residues long: N-acetylmannosamine kinase (291 aa).

Residues 5–12 and 132–139 each bind ATP; these read AIDIGGTK and GVGGGVVC. Zn(2+) contacts are provided by His156, Cys166, Cys168, and Cys173.

Belongs to the ROK (NagC/XylR) family. NanK subfamily. Homodimer.

It catalyses the reaction an N-acyl-D-mannosamine + ATP = an N-acyl-D-mannosamine 6-phosphate + ADP + H(+). The protein operates within amino-sugar metabolism; N-acetylneuraminate degradation; D-fructose 6-phosphate from N-acetylneuraminate: step 2/5. Catalyzes the phosphorylation of N-acetylmannosamine (ManNAc) to ManNAc-6-P. This is N-acetylmannosamine kinase from Salmonella agona (strain SL483).